Reading from the N-terminus, the 129-residue chain is DNA-directed RNA polymerase II subunit RPB9 (129 aa).

Residues Cys-21, Cys-24, Cys-43, Cys-46, Cys-90, Cys-93, Cys-118, and Cys-123 each contribute to the Zn(2+) site. A C4-type zinc finger spans residues 21 to 46; that stretch reads CQECNNMLYPKEDKENKILLYACRNC. A TFIIS-type zinc finger spans residues 86 to 128; sequence EDHACPKCSHREAVFFQAQTRRAEEEMRLYYVCTNQNCTHRWT.

This sequence belongs to the archaeal RpoM/eukaryotic RPA12/RPB9/RPC11 RNA polymerase family. As to quaternary structure, component of the RNA polymerase II (Pol II) complex consisting of 12 subunits.

It is found in the nucleus. The protein localises to the nucleolus. In terms of biological role, DNA-dependent RNA polymerase catalyzes the transcription of DNA into RNA using the four ribonucleoside triphosphates as substrates. Component of RNA polymerase II which synthesizes mRNA precursors and many functional non-coding RNAs. Pol II is the central component of the basal RNA polymerase II transcription machinery. It is composed of mobile elements that move relative to each other. RPB9 is part of the upper jaw surrounding the central large cleft and thought to grab the incoming DNA template. The sequence is that of DNA-directed RNA polymerase II subunit RPB9 from Drosophila melanogaster (Fruit fly).